The following is a 255-amino-acid chain: Fasciclin-like arabinogalactan protein 14 (255 aa).

The signal sequence occupies residues 1–23 (MSSSLTIFFFFFASTFLYTSSNS). One can recognise an FAS1 domain in the interval 24–169 (FNITNILNEH…ISVLHISSAI (146 aa)). N-linked (GlcNAc...) asparagine glycosylation is found at N25, N99, N125, and N159. The interval 179-231 (PTASPLSPVSSPPRPAESPNDDGQDFDEPPSSAPGAAADEPSENAGSANGVSR) is disordered. A compositionally biased stretch (acidic residues) spans 197–206 (PNDDGQDFDE). Residues 222 to 231 (NAGSANGVSR) show a composition bias toward polar residues. S225 carries GPI-anchor amidated serine lipidation. Positions 226-255 (ANGVSRNDSQPAFAFTLLMSFIWWFMARLR) are cleaved as a propeptide — removed in mature form.

This sequence belongs to the fasciclin-like AGP family.

The protein resides in the cell membrane. Functionally, may be a cell surface adhesion protein. In Arabidopsis thaliana (Mouse-ear cress), this protein is Fasciclin-like arabinogalactan protein 14 (FLA14).